Reading from the N-terminus, the 458-residue chain is ATP synthase subunit beta (458 aa).

An ATP-binding site is contributed by 148 to 155 (GGAGVGKT).

Belongs to the ATPase alpha/beta chains family. As to quaternary structure, F-type ATPases have 2 components, CF(1) - the catalytic core - and CF(0) - the membrane proton channel. CF(1) has five subunits: alpha(3), beta(3), gamma(1), delta(1), epsilon(1). CF(0) has three main subunits: a(1), b(2) and c(9-12). The alpha and beta chains form an alternating ring which encloses part of the gamma chain. CF(1) is attached to CF(0) by a central stalk formed by the gamma and epsilon chains, while a peripheral stalk is formed by the delta and b chains.

Its subcellular location is the cell inner membrane. The enzyme catalyses ATP + H2O + 4 H(+)(in) = ADP + phosphate + 5 H(+)(out). Functionally, produces ATP from ADP in the presence of a proton gradient across the membrane. The catalytic sites are hosted primarily by the beta subunits. This chain is ATP synthase subunit beta, found in Pseudomonas putida (strain GB-1).